A 273-amino-acid chain; its full sequence is MALKMYRPMTAGLRGRVDLCRAELTARTPEKSLTRGKPAKAGRGAGGRISVRHRGGGHKRRYRDIDFKRDLHDIPGTVKTIEYDPNRSVNIALVFYANGQKRYILAPKGLKVGQQVVSGEKVPLEPANALPLGVIPVGFTVHNVELTIGKGGQIARSAGTRAVIAAKDGGYVMLRLPSGEARLVHRRCYATIGELGNEDHMNTALGKAGRARWRGVRPTVRGMAMNPVDHPLGGGEGRGKGRNPVTPWGQPCRGYKTRKKRRVSDRFIVSKRK.

Disordered regions lie at residues Thr-28–Gly-55 and Gly-222–Lys-273. A compositionally biased stretch (basic residues) spans Tyr-255 to Lys-273.

It belongs to the universal ribosomal protein uL2 family. As to quaternary structure, part of the 50S ribosomal subunit. Forms a bridge to the 30S subunit in the 70S ribosome.

Its function is as follows. One of the primary rRNA binding proteins. Required for association of the 30S and 50S subunits to form the 70S ribosome, for tRNA binding and peptide bond formation. It has been suggested to have peptidyltransferase activity; this is somewhat controversial. Makes several contacts with the 16S rRNA in the 70S ribosome. This chain is Large ribosomal subunit protein uL2, found in Treponema pallidum (strain Nichols).